The sequence spans 385 residues: Leucine aminopeptidase 1 (385 aa).

The first 19 residues, 1 to 19 (MKFPSFLSLGIAASTTALA), serve as a signal peptide directing secretion. The propeptide occupies 20-87 (ALPDQKPIGD…FPRAFAKTAV (68 aa)). N-linked (GlcNAc...) asparagine glycosylation is present at Asn-177. Zn(2+)-binding residues include His-185 and Asp-204. A glycan (N-linked (GlcNAc...) asparagine) is linked at Asn-229. The Zn(2+) site is built by Glu-243 and Asp-270. Cys-319 and Cys-323 form a disulfide bridge. His-352 contributes to the Zn(2+) binding site.

This sequence belongs to the peptidase M28 family. M28E subfamily. In terms of assembly, monomer. Zn(2+) serves as cofactor.

It is found in the secreted. Functionally, extracellular aminopeptidase that allows assimilation of proteinaceous substrates. This Ajellomyces dermatitidis (strain ER-3 / ATCC MYA-2586) (Blastomyces dermatitidis) protein is Leucine aminopeptidase 1 (LAP1).